We begin with the raw amino-acid sequence, 1405 residues long: DNA-directed RNA polymerase subunit beta' (1405 aa).

The Zn(2+) site is built by Cys-71, Cys-73, Cys-86, and Cys-89. 3 residues coordinate Mg(2+): Asp-462, Asp-464, and Asp-466. Zn(2+) is bound by residues Cys-810, Cys-884, Cys-891, and Cys-894.

Belongs to the RNA polymerase beta' chain family. The RNAP catalytic core consists of 2 alpha, 1 beta, 1 beta' and 1 omega subunit. When a sigma factor is associated with the core the holoenzyme is formed, which can initiate transcription. Mg(2+) is required as a cofactor. The cofactor is Zn(2+).

It catalyses the reaction RNA(n) + a ribonucleoside 5'-triphosphate = RNA(n+1) + diphosphate. DNA-dependent RNA polymerase catalyzes the transcription of DNA into RNA using the four ribonucleoside triphosphates as substrates. The polypeptide is DNA-directed RNA polymerase subunit beta' (Maricaulis maris (strain MCS10) (Caulobacter maris)).